Here is a 432-residue protein sequence, read N- to C-terminus: T-box transcription factor T (432 aa).

Positions 49–217 form a DNA-binding region, T-box; it reads LWTRFKELTN…HNPFAKAFLD (169 aa). The interval 274 to 306 is disordered; sequence CERYSSLRNHRSAPYPSPYTHRNNSPNNLADNS. Residues 293 to 306 are compositionally biased toward polar residues; sequence THRNNSPNNLADNS.

As to quaternary structure, when not bound to DNA, exists as a monomer. Binds DNA as a dimer. As to expression, expressed in presumptive mesodermal cells around the blastopore, and then in the notochord.

The protein localises to the nucleus. In terms of biological role, involved in the transcriptional regulation of genes required for mesoderm formation and differentiation. Binds to the palindromic T site 5'-TTCACACCTAGGTGTGAA-3' DNA sequence. Causes dorsal mesodermal differentiation of animal cap ectoderm when co-expressed with wnt8 and noggin. None of these molecules causes dorsal mesoderm formation when expressed alone. Establishes the left/right axis at early gastrula stage by directly up-regulating mesodermal expression of zic3. The polypeptide is T-box transcription factor T (Xenopus laevis (African clawed frog)).